Reading from the N-terminus, the 252-residue chain is tRNA pseudouridine synthase A (252 aa).

The active-site Nucleophile is the D54. Y112 contributes to the substrate binding site.

It belongs to the tRNA pseudouridine synthase TruA family. Homodimer.

The catalysed reaction is uridine(38/39/40) in tRNA = pseudouridine(38/39/40) in tRNA. Formation of pseudouridine at positions 38, 39 and 40 in the anticodon stem and loop of transfer RNAs. In Oenococcus oeni (strain ATCC BAA-331 / PSU-1), this protein is tRNA pseudouridine synthase A.